Here is a 455-residue protein sequence, read N- to C-terminus: Neuronal acetylcholine receptor subunit beta-3 (455 aa).

Residues 1 to 20 (MLCLMLCVLCWSRSDVAALG) form the signal peptide. Topologically, residues 21–229 (SVVENEDALL…VTYSFVLRRL (209 aa)) are extracellular. 2 N-linked (GlcNAc...) asparagine glycosylation sites follow: Asn48 and Asn163. An intrachain disulfide couples Cys150 to Cys164. The next 3 helical transmembrane spans lie at 230–254 (PLFYTLFLIIPCLGLSFLTVLVFYL), 262–279 (LSLSTSVLVSLTVFLLVI), and 296–317 (YLLFIMIFVTLSIIVTVFVINV). At 318 to 425 (HHRSSATYHP…WKFVAQVLDR (108 aa)) the chain is on the cytoplasmic side. Residues 426-444 (IFLWLFLVVSVTGSVLIFT) form a helical membrane-spanning segment.

This sequence belongs to the ligand-gated ion channel (TC 1.A.9) family. Acetylcholine receptor (TC 1.A.9.1) subfamily. Beta-3/CHRNB3 sub-subfamily. Neuronal AChR seems to be composed of two different type of subunits: alpha and beta. CHRNB3/beta-3 subunit is only able to form functional nAChRs when co-assembled with another beta subunit. Participates in pentameric assemblies along with CHRNA4/alpha-4 and CHRNB2/beta-2 subunits and with CHRNA6/alpha-6 as well, forming stoichiometries such as (CHRNA3:CHRNB4)2:CHRNB3, (CHRNA4:CHRNB2)2:CHRNB3 or (CHRNA6:CHRNB2)2:CHRNB3. Relatively abundant in the developing retina and in the trigeminal ganglion.

Its subcellular location is the synaptic cell membrane. The protein localises to the cell membrane. It catalyses the reaction Ca(2+)(in) = Ca(2+)(out). It carries out the reaction K(+)(in) = K(+)(out). The enzyme catalyses Na(+)(in) = Na(+)(out). With respect to regulation, activated by a myriad of ligands such as acetylcholine, cytisine, nicotine, choline and epibatidine. In terms of biological role, component of neuronal acetylcholine receptors (nAChRs) that function as pentameric, ligand-gated cation channels with high calcium permeability among other activities. nAChRs are excitatory neurotrasnmitter receptors formed by a collection of nAChR subunits known to mediate synaptic transmission in the nervous system and the neuromuscular junction. Each nAchR subunit confers differential attributes to channel properties, including activation, deactivation and desensitization kinetics, pH sensitivity, cation permeability, and binding to allosteric modulators. Has an accessory rather than functional role and is only able to form functional nAChRs when co-assembled with another beta subunit. Participates in pentameric assemblies along with CHRNA3, CHRNA4, CHRNA6, CHRNB2 and CHRNB4. Modulates receptor assembly and increases receptor sensitivity to nicotine when associated with CHRNB2, CHRNA4 and/or CHRNA6 as well as CHRNA3 and CHRNB4. Seems to play a role in nicotine addiction. This chain is Neuronal acetylcholine receptor subunit beta-3 (CHRNB3), found in Gallus gallus (Chicken).